Consider the following 134-residue polypeptide: Ribosome-binding factor A (134 aa).

This sequence belongs to the RbfA family. In terms of assembly, monomer. Binds 30S ribosomal subunits, but not 50S ribosomal subunits or 70S ribosomes.

It localises to the cytoplasm. Functionally, one of several proteins that assist in the late maturation steps of the functional core of the 30S ribosomal subunit. Associates with free 30S ribosomal subunits (but not with 30S subunits that are part of 70S ribosomes or polysomes). Required for efficient processing of 16S rRNA. May interact with the 5'-terminal helix region of 16S rRNA. The chain is Ribosome-binding factor A from Parasynechococcus marenigrum (strain WH8102).